The sequence spans 132 residues: Sodium/calcium exchanger regulatory protein 1 (132 aa).

Residues Arg-126 and Tyr-128 each contribute to the (9Z)-hexadecenoate site.

Belongs to the calycin superfamily. Fatty-acid binding protein (FABP) family. In terms of assembly, interacts with Na(+)/Ca(2+) exchanger NCXSQ1; ReP1-NCXSQ phosphorylation does not affect the interaction. Post-translationally, phosphorylated. Phosphorylation may result in the release of the bound fatty acid. Expressed in the optic nerve (at protein level).

Its subcellular location is the cytoplasm. It localises to the membrane. Binds and may transport fatty acids such as palmitoleate. Also binds poly-phosphoinositides including phosphatidylinositol 4-phosphate (PtdIns(4)P), phosphatidylinositol 4,5-bisphosphate (PtdIns(4,5)P2) and phosphatidylinositol 3,4,5-trisphosphate (PtdIns(3,4,5)P3), and phosphatidic acid. When phosphorylated, stimulates the activity of optic nerve Na(+)/Ca(2+) exchanger. This is Sodium/calcium exchanger regulatory protein 1 from Doryteuthis pealeii (Longfin inshore squid).